We begin with the raw amino-acid sequence, 94 residues long: Integration host factor subunit beta (94 aa).

The protein belongs to the bacterial histone-like protein family. Heterodimer of an alpha and a beta chain.

Functionally, this protein is one of the two subunits of integration host factor, a specific DNA-binding protein that functions in genetic recombination as well as in transcriptional and translational control. This Pasteurella multocida (strain Pm70) protein is Integration host factor subunit beta (ihfB).